Here is a 316-residue protein sequence, read N- to C-terminus: Mitochondrial GTPase 1 (316 aa).

The CP-type G domain occupies M28–P203. GTP contacts are provided by residues N73 to D76, N147 to S152, and G199.

This sequence belongs to the TRAFAC class YlqF/YawG GTPase family. MTG1 subfamily.

The protein resides in the mitochondrion inner membrane. Its function is as follows. Plays a role in the regulation of the mitochondrial ribosome assembly and of translational activity. Displays mitochondrial GTPase activity. This chain is Mitochondrial GTPase 1, found in Aedes aegypti (Yellowfever mosquito).